The sequence spans 804 residues: E3 UFM1-protein ligase 1 homolog (804 aa).

Met1 is subject to N-acetylmethionine. The interval 397 to 483 is disordered; that stretch reads IHPSSKSSES…VKAQESNNII (87 aa). Over residues 400 to 409 the composition is skewed to low complexity; it reads SSKSSESTES. Over residues 463-475 the composition is skewed to basic and acidic residues; it reads LDSKAGGKKESVK.

Belongs to the UFL1 family.

E3 UFM1-protein ligase that mediates ufmylation of target proteins. In Arabidopsis thaliana (Mouse-ear cress), this protein is E3 UFM1-protein ligase 1 homolog.